A 66-amino-acid chain; its full sequence is DNA-directed RNA polymerase subunit Rpo10 (66 aa).

Residues C7, C10, C44, and C45 each coordinate Zn(2+).

Belongs to the archaeal Rpo10/eukaryotic RPB10 RNA polymerase subunit family. In terms of assembly, part of the RNA polymerase complex. Requires Zn(2+) as cofactor.

The protein localises to the cytoplasm. It catalyses the reaction RNA(n) + a ribonucleoside 5'-triphosphate = RNA(n+1) + diphosphate. DNA-dependent RNA polymerase (RNAP) catalyzes the transcription of DNA into RNA using the four ribonucleoside triphosphates as substrates. The chain is DNA-directed RNA polymerase subunit Rpo10 from Staphylothermus marinus (strain ATCC 43588 / DSM 3639 / JCM 9404 / F1).